Reading from the N-terminus, the 90-residue chain is Small ribosomal subunit protein bS16 (90 aa).

This sequence belongs to the bacterial ribosomal protein bS16 family.

This is Small ribosomal subunit protein bS16 from Clostridioides difficile (strain 630) (Peptoclostridium difficile).